A 337-amino-acid chain; its full sequence is Acetyl-coenzyme A synthetase (337 aa).

CoA contacts are provided by residues 131-134 (RGGR), Thr249, and Asn273. 325–327 (GEP) is a binding site for ATP.

It belongs to the ATP-dependent AMP-binding enzyme family. Mg(2+) is required as a cofactor. Acetylated. Deacetylation by the SIR2-homolog deacetylase activates the enzyme.

It carries out the reaction acetate + ATP + CoA = acetyl-CoA + AMP + diphosphate. Its function is as follows. Catalyzes the conversion of acetate into acetyl-CoA (AcCoA), an essential intermediate at the junction of anabolic and catabolic pathways. AcsA undergoes a two-step reaction. In the first half reaction, AcsA combines acetate with ATP to form acetyl-adenylate (AcAMP) intermediate. In the second half reaction, it can then transfer the acetyl group from AcAMP to the sulfhydryl group of CoA, forming the product AcCoA. The polypeptide is Acetyl-coenzyme A synthetase (acsA) (Nostoc linckia).